A 423-amino-acid chain; its full sequence is CinA-like protein (423 aa).

This sequence belongs to the CinA family.

This Chlorobaculum tepidum (strain ATCC 49652 / DSM 12025 / NBRC 103806 / TLS) (Chlorobium tepidum) protein is CinA-like protein.